The sequence spans 639 residues: Threonine--tRNA ligase (639 aa).

Positions 1–61 (MIRITLPDNS…DHDARLQIIT (61 aa)) constitute a TGS domain. Residues 242 to 533 (DHRRLGRELD…LIEQHAGALP (292 aa)) are catalytic. Zn(2+) contacts are provided by cysteine 333, histidine 384, and histidine 510.

The protein belongs to the class-II aminoacyl-tRNA synthetase family. Homodimer. Zn(2+) serves as cofactor.

It is found in the cytoplasm. It carries out the reaction tRNA(Thr) + L-threonine + ATP = L-threonyl-tRNA(Thr) + AMP + diphosphate + H(+). Its function is as follows. Catalyzes the attachment of threonine to tRNA(Thr) in a two-step reaction: L-threonine is first activated by ATP to form Thr-AMP and then transferred to the acceptor end of tRNA(Thr). Also edits incorrectly charged L-seryl-tRNA(Thr). The chain is Threonine--tRNA ligase from Paracidovorax citrulli (strain AAC00-1) (Acidovorax citrulli).